Consider the following 105-residue polypeptide: Large ribosomal subunit protein uL24 (105 aa).

Belongs to the universal ribosomal protein uL24 family. As to quaternary structure, part of the 50S ribosomal subunit.

One of two assembly initiator proteins, it binds directly to the 5'-end of the 23S rRNA, where it nucleates assembly of the 50S subunit. Its function is as follows. One of the proteins that surrounds the polypeptide exit tunnel on the outside of the subunit. This is Large ribosomal subunit protein uL24 from Staphylococcus carnosus (strain TM300).